The following is a 150-amino-acid chain: MRVVIQRVSQASVVVENKLISSIKTGYMLLVGISTEDTIADIEKSVRKVSGLRLFPDDSNAQWKRSIKDIGGEVLSISQFTLIARTKKGTRPDFHEAQKGHLALEMYDRFLDLLRQELGEKQVQDGEFGAMMSCSLTNEGPVTIIYDTKE.

The Gly-cisPro motif, important for rejection of L-amino acids signature appears at 140–141 (GP).

It belongs to the DTD family. Homodimer.

It localises to the cytoplasm. It carries out the reaction glycyl-tRNA(Ala) + H2O = tRNA(Ala) + glycine + H(+). The catalysed reaction is a D-aminoacyl-tRNA + H2O = a tRNA + a D-alpha-amino acid + H(+). Its function is as follows. An aminoacyl-tRNA editing enzyme that deacylates mischarged D-aminoacyl-tRNAs. Also deacylates mischarged glycyl-tRNA(Ala), protecting cells against glycine mischarging by AlaRS. Acts via tRNA-based rather than protein-based catalysis; rejects L-amino acids rather than detecting D-amino acids in the active site. By recycling D-aminoacyl-tRNA to D-amino acids and free tRNA molecules, this enzyme counteracts the toxicity associated with the formation of D-aminoacyl-tRNA entities in vivo and helps enforce protein L-homochirality. The chain is D-aminoacyl-tRNA deacylase (DTD1) from Eremothecium gossypii (strain ATCC 10895 / CBS 109.51 / FGSC 9923 / NRRL Y-1056) (Yeast).